The following is a 208-amino-acid chain: Small ribosomal subunit protein uS4 (208 aa).

An S4 RNA-binding domain is found at 98–161; the sequence is QRLDNVVYRM…KTNPQIVRAI (64 aa).

The protein belongs to the universal ribosomal protein uS4 family. In terms of assembly, part of the 30S ribosomal subunit. Contacts protein S5. The interaction surface between S4 and S5 is involved in control of translational fidelity.

One of the primary rRNA binding proteins, it binds directly to 16S rRNA where it nucleates assembly of the body of the 30S subunit. In terms of biological role, with S5 and S12 plays an important role in translational accuracy. In Campylobacter fetus subsp. fetus (strain 82-40), this protein is Small ribosomal subunit protein uS4.